Here is a 363-residue protein sequence, read N- to C-terminus: Flagellar P-ring protein (363 aa).

The N-terminal stretch at methionine 1–alanine 18 is a signal peptide.

Belongs to the FlgI family. As to quaternary structure, the basal body constitutes a major portion of the flagellar organelle and consists of four rings (L,P,S, and M) mounted on a central rod.

It is found in the periplasm. Its subcellular location is the bacterial flagellum basal body. Functionally, assembles around the rod to form the L-ring and probably protects the motor/basal body from shearing forces during rotation. The chain is Flagellar P-ring protein from Sulfurihydrogenibium sp. (strain YO3AOP1).